Here is a 396-residue protein sequence, read N- to C-terminus: Proteasome-activating nucleotidase (396 aa).

Residues 16–57 (VTYLKRRIRQLELQVRMLEADKERLERELSRLRSEMSRLRQP) adopt a coiled-coil conformation. ATP-binding positions include 181-186 (GCGKTL) and His-320. The tract at residues 394-396 (IYG) is docks into pockets in the proteasome alpha-ring to cause gate opening.

It belongs to the AAA ATPase family. As to quaternary structure, homohexamer. The hexameric complex has a two-ring architecture resembling a top hat that caps the 20S proteasome core at one or both ends. Upon ATP-binding, the C-terminus of PAN interacts with the alpha-rings of the proteasome core by binding to the intersubunit pockets.

Its subcellular location is the cytoplasm. Functionally, ATPase which is responsible for recognizing, binding, unfolding and translocation of substrate proteins into the archaeal 20S proteasome core particle. Is essential for opening the gate of the 20S proteasome via an interaction with its C-terminus, thereby allowing substrate entry and access to the site of proteolysis. Thus, the C-termini of the proteasomal ATPase function like a 'key in a lock' to induce gate opening and therefore regulate proteolysis. Unfolding activity requires energy from ATP hydrolysis, whereas ATP binding alone promotes ATPase-20S proteasome association which triggers gate opening, and supports translocation of unfolded substrates. This chain is Proteasome-activating nucleotidase, found in Pyrococcus furiosus (strain ATCC 43587 / DSM 3638 / JCM 8422 / Vc1).